We begin with the raw amino-acid sequence, 85 residues long: Probable dolichol-phosphate mannosyltransferase subunit 3 (85 aa).

The next 2 helical transmembrane spans lie at 13–33 (VLLV…LSYI) and 37–57 (AHCL…VATF).

It belongs to the DPM3 family.

It localises to the endoplasmic reticulum membrane. It functions in the pathway protein modification; protein glycosylation. Functionally, stabilizer subunit of the dolichol-phosphate-mannose synthase complex. This is Probable dolichol-phosphate mannosyltransferase subunit 3 from Caenorhabditis briggsae.